Consider the following 151-residue polypeptide: MYPAHLLVLLAVCVSLLGAASIPARPLNLYQFGNMIQCANHGRRPTWHYMDYGCYCGKGGSGTPVDELDRCCQIHDDCYGEAEKLPACNYMMSGPYYNTYSYECNEGELTCKDNNDECKAFICNCDRTAAICFARTPYNDANWNIDTKTRC.

The first 27 residues, 1 to 27 (MYPAHLLVLLAVCVSLLGAASIPARPL), serve as a signal peptide directing secretion. Cystine bridges form between C38/C104, C54/C151, C56/C72, C71/C132, C78/C125, C88/C118, and C111/C123. Y55, G57, and G59 together coordinate Ca(2+). Residue H75 is part of the active site. D76 contacts Ca(2+). The active site involves D126.

Belongs to the phospholipase A2 family. Group I subfamily. D49 sub-subfamily. Ca(2+) serves as cofactor. In terms of tissue distribution, expressed by the venom gland.

It is found in the secreted. The enzyme catalyses a 1,2-diacyl-sn-glycero-3-phosphocholine + H2O = a 1-acyl-sn-glycero-3-phosphocholine + a fatty acid + H(+). PLA2 catalyzes the calcium-dependent hydrolysis of the 2-acyl groups in 3-sn-phosphoglycerides. This chain is Acidic phospholipase A2 6, found in Tropidechis carinatus (Australian rough-scaled snake).